The primary structure comprises 162 residues: Cyclic pyranopterin monophosphate synthase (162 aa).

Residues 75 to 77 and 115 to 116 each bind substrate; these read MCH and ME. Residue aspartate 130 is part of the active site.

It belongs to the MoaC family. As to quaternary structure, homohexamer; trimer of dimers.

It catalyses the reaction (8S)-3',8-cyclo-7,8-dihydroguanosine 5'-triphosphate = cyclic pyranopterin phosphate + diphosphate. It participates in cofactor biosynthesis; molybdopterin biosynthesis. Functionally, catalyzes the conversion of (8S)-3',8-cyclo-7,8-dihydroguanosine 5'-triphosphate to cyclic pyranopterin monophosphate (cPMP). The protein is Cyclic pyranopterin monophosphate synthase of Geobacillus thermodenitrificans (strain NG80-2).